An 894-amino-acid chain; its full sequence is DNA mismatch repair protein MutS (894 aa).

Residue 632-639 (GPNMGGKS) coordinates ATP.

It belongs to the DNA mismatch repair MutS family.

Functionally, this protein is involved in the repair of mismatches in DNA. It is possible that it carries out the mismatch recognition step. This protein has a weak ATPase activity. The protein is DNA mismatch repair protein MutS of Paraburkholderia phytofirmans (strain DSM 17436 / LMG 22146 / PsJN) (Burkholderia phytofirmans).